Consider the following 250-residue polypeptide: Leucyl/phenylalanyl-tRNA--protein transferase (250 aa).

Belongs to the L/F-transferase family.

It is found in the cytoplasm. It catalyses the reaction N-terminal L-lysyl-[protein] + L-leucyl-tRNA(Leu) = N-terminal L-leucyl-L-lysyl-[protein] + tRNA(Leu) + H(+). The enzyme catalyses N-terminal L-arginyl-[protein] + L-leucyl-tRNA(Leu) = N-terminal L-leucyl-L-arginyl-[protein] + tRNA(Leu) + H(+). It carries out the reaction L-phenylalanyl-tRNA(Phe) + an N-terminal L-alpha-aminoacyl-[protein] = an N-terminal L-phenylalanyl-L-alpha-aminoacyl-[protein] + tRNA(Phe). Functions in the N-end rule pathway of protein degradation where it conjugates Leu, Phe and, less efficiently, Met from aminoacyl-tRNAs to the N-termini of proteins containing an N-terminal arginine or lysine. In Bordetella avium (strain 197N), this protein is Leucyl/phenylalanyl-tRNA--protein transferase.